The following is a 183-amino-acid chain: Apo-citrate lyase phosphoribosyl-dephospho-CoA transferase (183 aa).

This sequence belongs to the CitX family.

The enzyme catalyses apo-[citrate lyase ACP] + 2'-(5''-triphospho-alpha-D-ribosyl)-3'-dephospho-CoA = holo-[citrate lyase ACP] + diphosphate. Transfers 2-(5''-triphosphoribosyl)-3'-dephosphocoenzyme-A on a serine residue to the apo-acyl carrier protein (gamma chain) of the citrate lyase to yield holo-acyl carrier protein. The sequence is that of Apo-citrate lyase phosphoribosyl-dephospho-CoA transferase from Escherichia coli O9:H4 (strain HS).